The following is a 712-amino-acid chain: Osmolarity two-component system protein SSK1 (712 aa).

The segment at 73–114 is disordered; it reads ADNTSSNNTNDNSCRSKSNGAGSGANLSVNSNTKSSVSPTAG. The span at 74 to 85 shows a compositional bias: low complexity; that stretch reads DNTSSNNTNDNS. Residues 87–113 show a composition bias toward polar residues; sequence RSKSNGAGSGANLSVNSNTKSSVSPTA. 6 positions are modified to phosphoserine: serine 110, serine 195, serine 327, serine 351, serine 368, and serine 380. The interval 340–362 is disordered; the sequence is KADLKGKDGNSSPQEFKLITDEE. Residues 448–468 form a disordered region; it reads EVQRRKEDVTPASPILTSSQT. In terms of domain architecture, Response regulatory spans 505-647; sequence NVLIVEDNVI…WLSKKITEWG (143 aa). Aspartate 554 carries the 4-aspartylphosphate modification. The interval 672-712 is disordered; sequence KSPQKPIAPSNPHSFKQATSMTPTHSPVRKNSNLSPTQIEL. Serine 673 is modified (phosphoserine). The span at 682 to 712 shows a compositional bias: polar residues; sequence NPHSFKQATSMTPTHSPVRKNSNLSPTQIEL. A Phosphothreonine modification is found at threonine 693. Phosphoserine is present on residues serine 703 and serine 706.

This sequence belongs to the SSK1 family. As to quaternary structure, interacts with SSK2, SSK22 and YPD1. The phosphorelay mechanism involves the sequential transfer of a phosphate group from 'His-576' (H1) to 'Asp-1144' (D1) of SLN1, then to 'His-64' (H2) of YPD1 and finally to Asp-554 (D2) of SSK1.

The protein localises to the cytoplasm. Functionally, final receptor of the SLN1-YPD1-SSK1 two-component regulatory system, which controls activity of the HOG1 pathway in response to changes in the osmolarity of the extracellular environment. Under normal osmotic conditions, maintained in a phosphorylated and inactive state by the phosphorelay intermediate protein YPD1. Under conditions of high osmolarity, the histidine kinase SLN1 is no longer active and the unphosphorylated form of SSK1 interacts with and activates SSK2 and SSK22, two MAPKKKs that further stimulate the PBS2-HOG1 MAPKK-MAPK cascade. Unphosphorylated SSK1 is subsequently degraded by the UBC7-dependent ubiquitin-proteasome system to down-regulate the HOG1 pathway after completion of the osmotic adaptation. This is Osmolarity two-component system protein SSK1 from Saccharomyces cerevisiae (strain ATCC 204508 / S288c) (Baker's yeast).